Here is a 310-residue protein sequence, read N- to C-terminus: MAPKIFIDGEHGTTGLQIRTRMADRRDVELLSIPEAERRNAAMREDMLNSADIAILCLPDDASKEAVKMVSANNNVRVIDTSTAFRVHPDWAYGFAEMDKDQGGKITSARFVANPGCYPTGAVALIRPLRAAGILPDGYPVTVNAVSGYTGGGKQMIAQMENADHPDAITAPHFLYGLPLTHKHVPEMTTHGLLDRAPIFSPSVGKFAQGMIVQVPLHLDNLAEGATMESIHAALVGHFAGQDVVQVVSLAESRALPRINAVELAGKDTMKLFVFGTPGTSQVNLVALLDNLGKGASGAAVQNMDLMLSA.

The active site involves Cys-117.

It belongs to the NAGSA dehydrogenase family. Type 2 subfamily.

It localises to the cytoplasm. The enzyme catalyses N-acetyl-L-glutamate 5-semialdehyde + phosphate + NADP(+) = N-acetyl-L-glutamyl 5-phosphate + NADPH + H(+). Its pathway is amino-acid biosynthesis; L-arginine biosynthesis; N(2)-acetyl-L-ornithine from L-glutamate: step 3/4. Catalyzes the NADPH-dependent reduction of N-acetyl-5-glutamyl phosphate to yield N-acetyl-L-glutamate 5-semialdehyde. The sequence is that of N-acetyl-gamma-glutamyl-phosphate reductase from Rhizobium rhizogenes (strain K84 / ATCC BAA-868) (Agrobacterium radiobacter).